The sequence spans 418 residues: MLKKDMNIADFDPQLFQAIQDETRRQEEHIELIASENYTSPRVLEAQGSQLTNKYAEGYPGKRYYGGCEHVDIAEELAISRAKELFGATYANVQPHSGSQANAAVFMALLEGGDTVLGMSLAHGGHLTHGSHVSFSGKLYNSVQYGIDETTGKIDYAEVERLAVEHKPKMIIAGFSAYSGIIDWGKFREIADKVGAYLFVDMAHVAGLIAAGIYPNPLPHAHVVTTTTHKTLAGPRGGLILSAIDDEAIYKKLNSAVFPGGQGGPLMHVIAAKAVAFKEALEPEFTAYQEQVVVNAQAMAKTFIERGYDVVSGGTDNHLFLLDLISKDITGKDADAALGLANITVNKNSVPNDPRSPFVTSGLRIGSPAITRRGFKEAQAVELTNWMCDVLDDITNEGTIERVKNQVLELCAKFPVYG.

Residues Leu121 and 125–127 contribute to the (6S)-5,6,7,8-tetrahydrofolate site; that span reads GHL. At Lys230 the chain carries N6-(pyridoxal phosphate)lysine. Position 356-358 (356-358) interacts with (6S)-5,6,7,8-tetrahydrofolate; that stretch reads SPF.

The protein belongs to the SHMT family. Homodimer. Requires pyridoxal 5'-phosphate as cofactor.

The protein localises to the cytoplasm. The enzyme catalyses (6R)-5,10-methylene-5,6,7,8-tetrahydrofolate + glycine + H2O = (6S)-5,6,7,8-tetrahydrofolate + L-serine. Its pathway is one-carbon metabolism; tetrahydrofolate interconversion. It participates in amino-acid biosynthesis; glycine biosynthesis; glycine from L-serine: step 1/1. Functionally, catalyzes the reversible interconversion of serine and glycine with tetrahydrofolate (THF) serving as the one-carbon carrier. This reaction serves as the major source of one-carbon groups required for the biosynthesis of purines, thymidylate, methionine, and other important biomolecules. Also exhibits THF-independent aldolase activity toward beta-hydroxyamino acids, producing glycine and aldehydes, via a retro-aldol mechanism. The polypeptide is Serine hydroxymethyltransferase (Shewanella woodyi (strain ATCC 51908 / MS32)).